The chain runs to 417 residues: NADH-quinone oxidoreductase subunit D (417 aa).

It belongs to the complex I 49 kDa subunit family. NDH-1 is composed of 14 different subunits. Subunits NuoB, C, D, E, F, and G constitute the peripheral sector of the complex.

It is found in the cell inner membrane. It carries out the reaction a quinone + NADH + 5 H(+)(in) = a quinol + NAD(+) + 4 H(+)(out). In terms of biological role, NDH-1 shuttles electrons from NADH, via FMN and iron-sulfur (Fe-S) centers, to quinones in the respiratory chain. The immediate electron acceptor for the enzyme in this species is believed to be ubiquinone. Couples the redox reaction to proton translocation (for every two electrons transferred, four hydrogen ions are translocated across the cytoplasmic membrane), and thus conserves the redox energy in a proton gradient. This chain is NADH-quinone oxidoreductase subunit D, found in Burkholderia mallei (strain NCTC 10247).